Reading from the N-terminus, the 394-residue chain is MVKCSSIIHENKKPAQLLPESKFAAITKLSLAILSLFLGIAACILIALSGLLPNTLLIIALSLISIIVLSTGISLLIGTQCSKSVQKDEQKPKSIFPKETPSLDPWLLNPLKNKIQSSETLLLDPTSINLKNELFFPSFEEWKKIFLKDPDFLIKSALANWKILEQDEQYILSHIHMDPRIFVTSEPLQKTYQKLQEKHVNNLGIASQVSLTDLQNKTQYENNLIETTTNEITYYFPVVHNPDILRSEWDPISNQLYLIFKKFFIHYHNLFSTALERNQILLIDSLNTGSSNPIARQMELLAFLCVFEQLDYNEDEYTIEPRDYFNRFVYKNSQTAPQIQSFGLLHGYEEMSYASNNIRNVLTHSIVLCSPILYQLITEFDTTKIHADDFDCLI.

2 consecutive transmembrane segments (helical) span residues 31-51 and 57-77; these read LAIL…LSGL and LIIA…SLLI.

It belongs to the chlamydial CPn_0129/CT_036/TC_0306 family.

The protein resides in the cell membrane. This is an uncharacterized protein from Chlamydia pneumoniae (Chlamydophila pneumoniae).